The following is a 219-amino-acid chain: Transcriptional activator protein rep2 (219 aa).

A zinc finger lies at 177-197 (CSKCNTTFNHSTALMMHEATC).

Transcriptional activator which interacts with the mcb binding subunit complex formed by res2 and cdc10. Rep2 is required for the mitotic cell cycle start. The polypeptide is Transcriptional activator protein rep2 (rep2) (Schizosaccharomyces pombe (strain 972 / ATCC 24843) (Fission yeast)).